Here is a 101-residue protein sequence, read N- to C-terminus: Ribonuclease kappa-B (101 aa).

2 helical membrane passes run 13–33 and 68–88; these read ACGI…GVFF and VSYN…FSFC.

Belongs to the RNase K family.

It is found in the membrane. Functionally, endoribonuclease which preferentially cleaves ApU and ApG phosphodiester bonds. The polypeptide is Ribonuclease kappa-B (rnasek-b) (Xenopus laevis (African clawed frog)).